The sequence spans 1166 residues: Zinc finger CCHC domain-containing protein 2 (1166 aa).

Disordered regions lie at residues 1–85 (MLRM…GGHA), 205–240 (RAEG…CAKL), 550–668 (SSAD…ARFS), and 904–982 (PASF…ISAV). Pro residues predominate over residues 43-64 (PPPPPTGLPRGPPPPPSPPRGL). Positions 65 to 76 (EPPVASGPTAGA) are enriched in low complexity. A compositionally biased stretch (acidic residues) spans 214–223 (EDEPSGDGEQ). Basic and acidic residues predominate over residues 572-587 (PQVEKEKVKKTEDRLN). Low complexity predominate over residues 624-633 (SSESYSSPSS). Residues 634–653 (PRHDGRESLESEEEKDRDSD) are compositionally biased toward basic and acidic residues. Residues 919–947 (LPTQNSSALNAATSAQPASTGISPSQSTV) are compositionally biased toward polar residues. A compositionally biased stretch (pro residues) spans 949–963 (PAVPTHTPGPAPSPS). The segment covering 964–982 (PALTHSTAQSDSTSYISAV) has biased composition (polar residues). Residues 1119-1136 (VSCYNCGVSGHYAQDCKQ) form a CCHC-type zinc finger.

The protein is Zinc finger CCHC domain-containing protein 2 (Zcchc2) of Mus musculus (Mouse).